A 519-amino-acid chain; its full sequence is Cytochrome P450 monooxygenase AtmP (519 aa).

The helical transmembrane segment at 21–41 threads the bilayer; it reads SMLLVVTLVILFLWFIIPSPV. Cysteine 457 is a binding site for heme.

The protein belongs to the cytochrome P450 family. Heme is required as a cofactor.

It is found in the membrane. The protein operates within secondary metabolite biosynthesis. Cytochrome P450 monooxygenase; part of the ATM2 gene cluster that mediates the biosynthesis of aflatrem, a tremorgenic mycotoxin with acute neurotoxic effects. Synthesis of geranylgeranyl diphosphate (GGPP) by AtmG (a GGPP synthase) precedes condensation of GGPP with indole 3-glycerol phosphate, followed by epoxidation and cyclization by AtmM (a FAD-dependent monooxygenase) and AtmC (a prenyltransferase) to produce paspaline. AtmB is also essential for paspaline production, but its exact role has not been identified yet. AtmP, a cytochrome P450 monooxygenase, subsequently converts paspaline to 13-desoxypaxilline via PC-M6 by removal of the C-30 methyl group and oxidation at C-10. AtmQ, a cytochrome P450 monooxygenase, then catalyzes the oxidation of 13-desoxypaxilline, first at C-7 to produce paspalicine and then at C-13 to form paspalinine. Finally, AtmD prenylates paspalinine to form aflatrem. The chain is Cytochrome P450 monooxygenase AtmP from Aspergillus flavus.